A 122-amino-acid polypeptide reads, in one-letter code: Large ribosomal subunit protein bL12 (122 aa).

It belongs to the bacterial ribosomal protein bL12 family. Homodimer. Part of the 50S ribosomal subunit; present in 4 copies per ribosome. Forms part of the ribosomal stalk which helps the ribosome interact with GTP-bound translation factors. Forms a pentameric L10(L12)2(L12)2 complex, where L10 forms an elongated spine to which 2 L12 dimers bind in a sequential fashion.

Forms part of the ribosomal stalk which helps the ribosome interact with GTP-bound translation factors. Is thus essential for accurate translation. This is Large ribosomal subunit protein bL12 from Geobacillus stearothermophilus (Bacillus stearothermophilus).